The primary structure comprises 481 residues: Surface lipoprotein assembly modifier 2 (481 aa).

The first 24 residues, 1–24 (MKNGVKQLFLLSLIGLSLTNVAWA), serve as a signal peptide directing secretion. The tract at residues 24–192 (AEVARPKNDT…QYLLTLNQRN (169 aa)) is N-terminal domain. Residues 193-481 (QWIWQVGLNF…RIYLEIGKIF (289 aa)) are C-terminal probable beta barrel. The next 14 membrane-spanning stretches (beta stranded) occupy residues 194-204 (WIWQVGLNFLN), 223-243 (AWEK…KKWP), 248-257 (FFSKTMFNGN), 271-281 (TVRIGGGLGYQ), 285-295 (VEVSLFPFQEK), 315-325 (LGIRLENVDWL), 329-339 (WQISTALEYGE), 353-363 (YFVSSTLFYLP), 368-377 (FWFVGMDFHR), 390-399 (KTLRLGWGQD), 404-414 (ISSRLTFSYAN), 432-441 (YTTTITLWHR), 448-458 (LTPKLSWDYQK), and 471-481 (NRIYLEIGKIF).

This sequence belongs to the Slam family.

The protein resides in the cell outer membrane. Functionally, required for correct export to the cell surface of some cell outer membrane lipoproteins. This is Surface lipoprotein assembly modifier 2 from Haemophilus influenzae (strain ATCC 51907 / DSM 11121 / KW20 / Rd).